A 137-amino-acid polypeptide reads, in one-letter code: MLSGRLVPGLVSMAGRVCLCQGSAGSGAVGPVEAAIRTKLEQALSPEVLELRNESGGHAVPPGSETHFRVAVVSSRFEGLSPLQRHRLIHAALAEELAGPVHALAIQARTPAQWGENSQLDTSPPCLGGNKKTLGTP.

S81 bears the Phosphoserine mark. The interval 114 to 137 is disordered; that stretch reads WGENSQLDTSPPCLGGNKKTLGTP.

It belongs to the BolA/IbaG family. As to quaternary structure, interacts with GLRX5.

The protein resides in the mitochondrion. Its function is as follows. Acts as a mitochondrial iron-sulfur (Fe-S) cluster assembly factor that facilitates (Fe-S) cluster insertion into a subset of mitochondrial proteins. Probably acts together with the monothiol glutaredoxin GLRX5. May protect cells against oxidative stress. The polypeptide is BolA-like protein 1 (BOLA1) (Pongo abelii (Sumatran orangutan)).